Here is a 3567-residue protein sequence, read N- to C-terminus: Zinc finger homeobox protein 4 (3567 aa).

Residue Met1 is modified to N-acetylmethionine. Disordered regions lie at residues 1-54 (METC…LKTD), 425-480 (LSHS…AYSN), 522-545 (TSSS…VRAS), and 565-611 (SKDS…SPGS). The segment covering 9–28 (ISRQENGQSTSKLCGTTQLD) has biased composition (polar residues). Basic and acidic residues-rich tracts occupy residues 39-54 (EPDR…LKTD) and 434-452 (KMSE…KESN). Residues 468–480 (EPGDEDEEDAYSN) show a composition bias toward acidic residues. 3 C2H2-type zinc fingers span residues 613-636 (IECP…TMMH), 644-667 (LKCP…KEKH), and 699-723 (FRCE…SDKH). A C2H2-type 4; degenerate zinc finger spans residues 767 to 789 (WRCEVCDYETNVARNLRIHMTSE). 3 consecutive C2H2-type zinc fingers follow at residues 917-941 (YQCK…TDKH), 973-995 (LKCN…TTNH), and 1021-1045 (YYCA…SVKH). The segment at 1098 to 1160 (EQHEEAEGAI…EDVATKRSKP (63 aa)) is disordered. 2 stretches are compositionally biased toward basic and acidic residues: residues 1120–1132 (TSER…KNSN) and 1148–1160 (AKEE…RSKP). Lys1149 participates in a covalent cross-link: Glycyl lysine isopeptide (Lys-Gly) (interchain with G-Cter in SUMO2). 2 C2H2-type zinc fingers span residues 1172–1195 (YQCP…LSQH) and 1201–1224 (ICCP…THLH). The segment at 1254-1324 (AASEKSERDT…WNKNSSKDVK (71 aa)) is disordered. The segment covering 1281-1310 (MDDKSMAGLEDSKANVEVKNEEQKPTKEPL) has biased composition (basic and acidic residues). Residues Lys1299 and Lys1324 each participate in a glycyl lysine isopeptide (Lys-Gly) (interchain with G-Cter in SUMO2) cross-link. 2 consecutive C2H2-type zinc fingers follow at residues 1352–1374 (YRCN…SQYH) and 1380–1403 (TMCN…EAGH). Residues 1429–1480 (ETMSQDDHGLEQEMEREYEVDHEGKASPVGSDSSSIPDDMGSEPKRTLPFRK) form a disordered region. The span at 1433 to 1453 (QDDHGLEQEMEREYEVDHEGK) shows a compositional bias: basic and acidic residues. The C2H2-type 12 zinc-finger motif lies at 1496 to 1522 (YKCTVCKESFTQKNILLVHYNSVSHLH). A Glycyl lysine isopeptide (Lys-Gly) (interchain with G-Cter in SUMO2) cross-link involves residue Lys1546. The C2H2-type 13 zinc finger occupies 1548–1572 (YKCSICNVAYSQSSTLEIHMRSVLH). 2 stretches are compositionally biased toward low complexity: residues 1761–1772 (TQPQLQPQKQQQ) and 1779–1791 (QQQQ…LLKQ). 2 disordered regions span residues 1761 to 1791 (TQPQ…LLKQ) and 1809 to 1858 (SYKE…IASG). Lys1790 is covalently cross-linked (Glycyl lysine isopeptide (Lys-Gly) (interchain with G-Cter in SUMO2)). Residues 1809–1845 (SYKEAEDISEKPEKPKQEFISEGEGLKEGKDTKKQKS) show a composition bias toward basic and acidic residues. The C2H2-type 14 zinc-finger motif lies at 1901–1924 (LECGTCGKLFSNVLILKSHQEHVH). The disordered stretch occupies residues 1948 to 2024 (YPISPSSPET…PPSAPPQVQL (77 aa)). Pro residues-rich tracts occupy residues 1955–1974 (PETP…PPQP) and 1991–2019 (QAPP…PSAP). 2 DNA-binding regions (homeobox) span residues 2084-2143 (FKRP…RQRN) and 2181-2240 (KRSS…RKSY). The segment at 2267 to 2291 (YQCKKCNVVFPRIFDLITHQKKQCY) adopts a C2H2-type 15; degenerate zinc-finger fold. Disordered stretches follow at residues 2289–2311 (QCYK…MDAT) and 2328–2431 (AKNA…SPLQ). Residues 2293 to 2309 (DEDDDAQDESQTEDSMD) show a composition bias toward acidic residues. A compositionally biased stretch (low complexity) spans 2331 to 2345 (AAAPAASSGSGTSTP). Residues 2352–2370 (PEPEKTSPKPEYPAEKPKQ) are compositionally biased toward basic and acidic residues. Polar residues predominate over residues 2419 to 2431 (SASQTPVPSSPLQ). A C2H2-type 16 zinc finger spans residues 2448–2470 (YQCDQCTVAFPTLELWQEHQHMH). Residues 2507 to 2530 (LGSSLTQMPPQASSSHTTAPTTVA) show a composition bias toward polar residues. A disordered region spans residues 2507–2564 (LGSSLTQMPPQASSSHTTAPTTVAASLKRKLDDKEDNNCSEKEGGNSGEDQHRDKRLR). Residues 2535-2559 (RKLDDKEDNNCSEKEGGNSGEDQHR) are compositionally biased toward basic and acidic residues. The segment at residues 2560–2619 (DKRLRTTITPEQLEILYEKYLLDSNPTRKMLDHIAREVGLKKRVVQVWFQNTRARERKGQ) is a DNA-binding region (homeobox 3). The C2H2-type 17 zinc finger occupies 2630-2653 (KRCPFCRALFKAKSALESHIRSRH). Ser2663 carries the phosphoserine modification. Residues 2764 to 2785 (AISDATTGDEGNTEMESTTGSS) show a composition bias toward polar residues. Disordered stretches follow at residues 2764 to 2811 (AISD…TTPT) and 2829 to 2885 (HFND…PGHK). Over residues 2830–2839 (FNDKDGDHDQ) the composition is skewed to basic and acidic residues. The segment covering 2862-2874 (PSSPNPFGSSNPF) has biased composition (low complexity). The segment at residues 2884–2943 (HKRFRTQMSNLQLKVLKACFSDYRTPTMQECEMLGNEIGLPKRVVQVWFQNARAKEKKFK) is a DNA-binding region (homeobox 4). The segment at 2962–2986 (PECTLCGVKYSARLSIRDHIFSKQH) adopts a C2H2-type 18 zinc-finger fold. Over residues 3092-3110 (SATSSPALSLSSAPTKPLL) the composition is skewed to low complexity. Disordered regions lie at residues 3092-3172 (SATS…KEEK) and 3281-3337 (LQKQ…LESK). The span at 3111–3125 (QTPPPPPPPPPPPPS) shows a compositional bias: pro residues. Polar residues predominate over residues 3126 to 3135 (SSLSGQQTEQ). Residues 3153–3172 (IKEEELEATKPEKHPKKEEK) are compositionally biased toward basic and acidic residues. Lys3154 participates in a covalent cross-link: Glycyl lysine isopeptide (Lys-Gly) (interchain with G-Cter in SUMO2). A coiled-coil region spans residues 3265–3294 (ALLQQYQQYQQNLQESLQKQQKQQQEQQQK). Residues 3281–3293 (LQKQQKQQQEQQQ) show a composition bias toward low complexity. The span at 3294 to 3314 (KPVQAKTSKVESDQPQNSNDA) shows a compositional bias: polar residues. Residues 3315 to 3337 (SETKEDKSTATESTKEEPQLESK) are compositionally biased toward basic and acidic residues. The segment at 3354–3378 (FICRKCQMMFTDEDAAVNHQKSFCY) adopts a C2H2-type 19; degenerate zinc-finger fold. The segment at 3398 to 3422 (YQCLACDVAISGNEALSQHLQSSLH) adopts a C2H2-type 20 zinc-finger fold. Disordered stretches follow at residues 3443 to 3462 (HSVC…AASS) and 3511 to 3534 (STSG…ELSQ). Over residues 3447 to 3462 (SPNPNTTSTSQSAASS) the composition is skewed to low complexity.

The protein belongs to the krueppel C2H2-type zinc-finger protein family. Expressed in brain, skeletal muscle and liver. Very low expression in stomach.

The protein localises to the nucleus. In terms of biological role, may play a role in neural and muscle differentiation. May be involved in transcriptional regulation. This is Zinc finger homeobox protein 4 (ZFHX4) from Homo sapiens (Human).